A 540-amino-acid polypeptide reads, in one-letter code: Glucose-6-phosphate isomerase (540 aa).

The active-site Proton donor is Glu346. Catalysis depends on residues His377 and Lys505.

This sequence belongs to the GPI family.

The protein localises to the cytoplasm. It carries out the reaction alpha-D-glucose 6-phosphate = beta-D-fructose 6-phosphate. The protein operates within carbohydrate biosynthesis; gluconeogenesis. It functions in the pathway carbohydrate degradation; glycolysis; D-glyceraldehyde 3-phosphate and glycerone phosphate from D-glucose: step 2/4. Its function is as follows. Catalyzes the reversible isomerization of glucose-6-phosphate to fructose-6-phosphate. This chain is Glucose-6-phosphate isomerase, found in Francisella tularensis subsp. tularensis (strain SCHU S4 / Schu 4).